Reading from the N-terminus, the 166-residue chain is 6,7-dimethyl-8-ribityllumazine synthase (166 aa).

Residues Trp-31, 63–65 (SFE), and 85–87 (VII) contribute to the 5-amino-6-(D-ribitylamino)uracil site. 90-91 (GT) contributes to the (2S)-2-hydroxy-3-oxobutyl phosphate binding site. Catalysis depends on His-93, which acts as the Proton donor. Residue Phe-118 participates in 5-amino-6-(D-ribitylamino)uracil binding. Arg-132 provides a ligand contact to (2S)-2-hydroxy-3-oxobutyl phosphate.

The protein belongs to the DMRL synthase family.

The enzyme catalyses (2S)-2-hydroxy-3-oxobutyl phosphate + 5-amino-6-(D-ribitylamino)uracil = 6,7-dimethyl-8-(1-D-ribityl)lumazine + phosphate + 2 H2O + H(+). It participates in cofactor biosynthesis; riboflavin biosynthesis; riboflavin from 2-hydroxy-3-oxobutyl phosphate and 5-amino-6-(D-ribitylamino)uracil: step 1/2. Its function is as follows. Catalyzes the formation of 6,7-dimethyl-8-ribityllumazine by condensation of 5-amino-6-(D-ribitylamino)uracil with 3,4-dihydroxy-2-butanone 4-phosphate. This is the penultimate step in the biosynthesis of riboflavin. The chain is 6,7-dimethyl-8-ribityllumazine synthase from Cutibacterium acnes (strain DSM 16379 / KPA171202) (Propionibacterium acnes).